A 261-amino-acid polypeptide reads, in one-letter code: Cytochrome c oxidase subunit 3 (261 aa).

Over 1–15 (MTNQLHPFHMTNPSP) the chain is Mitochondrial matrix. The chain crosses the membrane as a helical span at residues 16–34 (WPLTGATAALLMTSGLIMW). At 35 to 40 (FHYNSS) the chain is on the mitochondrial intermembrane side. Residues 41 to 66 (QLIMLGLLIMLLTLTQWWRDIVREST) traverse the membrane as a helical segment. Residues 67–72 (FQGHHT) lie on the Mitochondrial matrix side of the membrane. A helical membrane pass occupies residues 73–105 (PSVQNNLRYGMILFITSEILFFTGFFWAFYHSS). The Mitochondrial intermembrane portion of the chain corresponds to 106 to 128 (LSPTAELGNIWPPTGITPLNPFE). The helical transmembrane segment at 129–152 (VPLLNTAVLLASGVTITWAHHSLM) threads the bilayer. Residues 153–155 (EGN) lie on the Mitochondrial matrix side of the membrane. A helical transmembrane segment spans residues 156–183 (RPQTLQALTLTIILGTYFTILQAMEYFE). The Mitochondrial intermembrane portion of the chain corresponds to 184–190 (ASFTIAD). Residues 191 to 223 (SIYGSTFFVATGFHGLHVIIGSTFLIVCLMRQL) traverse the membrane as a helical segment. Residues 224 to 232 (KYHFTSHHH) are Mitochondrial matrix-facing. Residues 233 to 256 (FGFEAAAWYWHFVDVIWLFLYLSI) form a helical membrane-spanning segment. Residues 257–261 (YWWGS) lie on the Mitochondrial intermembrane side of the membrane.

Belongs to the cytochrome c oxidase subunit 3 family. In terms of assembly, component of the cytochrome c oxidase (complex IV, CIV), a multisubunit enzyme composed of 14 subunits. The complex is composed of a catalytic core of 3 subunits MT-CO1, MT-CO2 and MT-CO3, encoded in the mitochondrial DNA, and 11 supernumerary subunits COX4I, COX5A, COX5B, COX6A, COX6B, COX6C, COX7A, COX7B, COX7C, COX8 and NDUFA4, which are encoded in the nuclear genome. The complex exists as a monomer or a dimer and forms supercomplexes (SCs) in the inner mitochondrial membrane with NADH-ubiquinone oxidoreductase (complex I, CI) and ubiquinol-cytochrome c oxidoreductase (cytochrome b-c1 complex, complex III, CIII), resulting in different assemblies (supercomplex SCI(1)III(2)IV(1) and megacomplex MCI(2)III(2)IV(2)).

The protein localises to the mitochondrion inner membrane. It catalyses the reaction 4 Fe(II)-[cytochrome c] + O2 + 8 H(+)(in) = 4 Fe(III)-[cytochrome c] + 2 H2O + 4 H(+)(out). Functionally, component of the cytochrome c oxidase, the last enzyme in the mitochondrial electron transport chain which drives oxidative phosphorylation. The respiratory chain contains 3 multisubunit complexes succinate dehydrogenase (complex II, CII), ubiquinol-cytochrome c oxidoreductase (cytochrome b-c1 complex, complex III, CIII) and cytochrome c oxidase (complex IV, CIV), that cooperate to transfer electrons derived from NADH and succinate to molecular oxygen, creating an electrochemical gradient over the inner membrane that drives transmembrane transport and the ATP synthase. Cytochrome c oxidase is the component of the respiratory chain that catalyzes the reduction of oxygen to water. Electrons originating from reduced cytochrome c in the intermembrane space (IMS) are transferred via the dinuclear copper A center (CU(A)) of subunit 2 and heme A of subunit 1 to the active site in subunit 1, a binuclear center (BNC) formed by heme A3 and copper B (CU(B)). The BNC reduces molecular oxygen to 2 water molecules using 4 electrons from cytochrome c in the IMS and 4 protons from the mitochondrial matrix. The chain is Cytochrome c oxidase subunit 3 (MT-CO3) from Pelomedusa subrufa (African side-necked turtle).